We begin with the raw amino-acid sequence, 276 residues long: Mitochondrial outer membrane protein porin 2 (276 aa).

Ser76 carries the phosphoserine modification. Residue Thr236 is modified to Phosphothreonine.

This sequence belongs to the eukaryotic mitochondrial porin (TC 1.B.8.1) family. Expressed in root tips, steles, leaves, sepals, petals, stamen and pistils.

It localises to the mitochondrion outer membrane. Forms a channel through the mitochondrial outer membrane that allows diffusion of small hydrophilic molecules. The channel adopts an open conformation at low or zero membrane potential and a closed conformation at potentials above 30-40 mV. The open state has a weak anion selectivity whereas the closed state is cation-selective. Involved in plant growth and development at the vegetative and reproductive stages. Is important for leaf and pollen development and mitochondrial membrane potential steady state. May be involved in ABA-mediated early seedling development and disease resistance. This is Mitochondrial outer membrane protein porin 2 (VDAC2) from Arabidopsis thaliana (Mouse-ear cress).